The following is a 468-amino-acid chain: Aspartate ammonia-lyase (468 aa).

Positions 99, 138, 139, 140, and 185 each coordinate L-aspartate. The segment at 315 to 324 (GSSIMPGKVN) is SS loop. Serine 316 acts as the Proton acceptor in catalysis. L-aspartate-binding residues include serine 317 and lysine 322.

The protein belongs to the class-II fumarase/aspartase family. Aspartase subfamily. In terms of assembly, homotetramer.

The enzyme catalyses L-aspartate = fumarate + NH4(+). Catalyzes the reversible conversion of L-aspartate to fumarate and ammonia. The polypeptide is Aspartate ammonia-lyase (aspA) (Helicobacter pylori (strain J99 / ATCC 700824) (Campylobacter pylori J99)).